A 467-amino-acid polypeptide reads, in one-letter code: Acetaldehyde dehydrogenase (acetylating) EutE (467 aa).

A targets protein to the BMC region spans residues 1–19 (MNQQDIEQVVKAVLLKMKD).

This sequence belongs to the EutE/PduP family. As to quaternary structure, interacts with EutS, which targets it to the interior of the BMC.

It is found in the bacterial microcompartment. The enzyme catalyses acetaldehyde + NAD(+) + CoA = acetyl-CoA + NADH + H(+). It participates in amine and polyamine degradation; ethanolamine degradation. Acts as the second step in ethanolamine degradation by converting acetaldehyde into acetyl-CoA. Has a very strong preference for NAD(+) over NADP(+) in both catalytic directions. May play a role in bacterial microcompartment (BMC) assembly or maintenance. Directly targeted to the BMC. Its function is as follows. Expression of the eut operon allows this bacteria to use ethanolamine (EA) as a carbon, nitrogen and energy source. It relies on cobalamin (vitamin B12) both as a cofactor for the ethanolamine ammonia-lyase (EAL) activity and to induce the operon. EA enhances bacterial survival in macrophages in a concentration-dependent manner, suggesting it is an important nutrient during infection. This chain is Acetaldehyde dehydrogenase (acetylating) EutE, found in Salmonella typhimurium (strain LT2 / SGSC1412 / ATCC 700720).